A 180-amino-acid polypeptide reads, in one-letter code: MTTTEFPSAVAKARFVRVSPRKARRVIDLVRGRSVTDALDILRWAPQAASEPVAKVIASAAANAQNNNGLDPATLVVATVYADEGPTAKRIRPRAQGRAFRIRKRTSHITVVVESRPAKDQRSAKSSRTRRAEASKAAAKAPAKKAPAKKAPAKKAPAKTAAKKTPAKTSETSDAKGGSD.

Positions 111-180 (VVVESRPAKD…ETSDAKGGSD (70 aa)) are disordered. Positions 142–166 (PAKKAPAKKAPAKKAPAKTAAKKTP) are enriched in basic residues. Residues 171-180 (ETSDAKGGSD) are compositionally biased toward basic and acidic residues.

It belongs to the universal ribosomal protein uL22 family. In terms of assembly, part of the 50S ribosomal subunit.

In terms of biological role, this protein binds specifically to 23S rRNA; its binding is stimulated by other ribosomal proteins, e.g. L4, L17, and L20. It is important during the early stages of 50S assembly. It makes multiple contacts with different domains of the 23S rRNA in the assembled 50S subunit and ribosome. Functionally, the globular domain of the protein is located near the polypeptide exit tunnel on the outside of the subunit, while an extended beta-hairpin is found that lines the wall of the exit tunnel in the center of the 70S ribosome. The protein is Large ribosomal subunit protein uL22 of Mycobacterium avium (strain 104).